A 210-amino-acid polypeptide reads, in one-letter code: Glycerol-3-phosphate acyltransferase (210 aa).

The next 5 membrane-spanning stretches (helical) occupy residues 10–30 (ALIL…GIVI), 59–79 (PAAL…VLIA), 87–107 (AAQL…WLGF), 116–136 (FLGT…LTWL), and 161–181 (LLLG…LIFI).

This sequence belongs to the PlsY family. As to quaternary structure, probably interacts with PlsX.

The protein localises to the cell inner membrane. The catalysed reaction is an acyl phosphate + sn-glycerol 3-phosphate = a 1-acyl-sn-glycero-3-phosphate + phosphate. It participates in lipid metabolism; phospholipid metabolism. Functionally, catalyzes the transfer of an acyl group from acyl-phosphate (acyl-PO(4)) to glycerol-3-phosphate (G3P) to form lysophosphatidic acid (LPA). This enzyme utilizes acyl-phosphate as fatty acyl donor, but not acyl-CoA or acyl-ACP. This chain is Glycerol-3-phosphate acyltransferase, found in Cereibacter sphaeroides (strain ATCC 17025 / ATH 2.4.3) (Rhodobacter sphaeroides).